The sequence spans 577 residues: Solute carrier family 22 member 16 (577 aa).

Residues 23-43 traverse the membrane as a helical segment; that stretch reads LYFICAFQNISCGIHYLASVF. Residues N57, N65, N68, and N108 are each glycosylated (N-linked (GlcNAc...) asparagine). The next 5 helical transmembrane spans lie at 152–172, 183–203, 214–234, 244–264, and 268–288; these read WLAM…SVTF, VVLW…AFAV, FLAM…MEFI, VHLH…GYLV, and WLYQ…CWVL. N-linked (GlcNAc...) asparagine glycosylation is found at N345 and N352. 6 helical membrane-spanning segments follow: residues 359 to 379, 389 to 409, 416 to 436, 441 to 461, 476 to 496, and 501 to 521; these read TLTV…FSLN, LNLF…CIAM, TVLA…MVIP, ILGV…FGLI, LAVG…PFSV, and IWIF…GVLT. Positions 543-577 are disordered; that stretch reads ESENESKSSKLLLTTNNSGLEKTEAITPRDSGLGE. Residues N546 and N558 are each glycosylated (N-linked (GlcNAc...) asparagine). Residues 551-560 show a composition bias toward low complexity; sequence SKLLLTTNNS.

The protein belongs to the major facilitator (TC 2.A.1) superfamily. Organic cation transporter (TC 2.A.1.19) family. Expressed in testis and epididymis (at protein level). Expressed in endometrium (at protein level); highly expressed during the normal secretory phase, but expression is significantly reduced in the proliferative phase. Expressed at lower levels in adult tissues including bone marrow (at protein level). Expressed in hematopoietic cells, including CD34(+) leukocytes. Expressed in fetal liver (at protein level), brain, lung, kidney, heart, skeletal muscle, spleen and thymus. Expressed in leukemia cells. Abundantly expressed in ovarian cancer clear-cell adenocarcinoma.

The protein localises to the cell membrane. The catalysed reaction is (R)-carnitine(in) = (R)-carnitine(out). It catalyses the reaction spermidine(in) = spermidine(out). Functionally, facilitative organic cation transporter that mediates the transport of carnitine as well as the polyamine spermidine. Mediates the partially Na(+)-dependent bidirectional transport of carnitine. May mediate L-carnitine secretion from testis epididymal epithelium into the lumen which is involved in the maturation of spermatozoa. This chain is Solute carrier family 22 member 16, found in Homo sapiens (Human).